The chain runs to 159 residues: Ribosomal RNA large subunit methyltransferase H (159 aa).

S-adenosyl-L-methionine-binding positions include L76, G108, and 127–132; that span reads MSKMTF.

This sequence belongs to the RNA methyltransferase RlmH family. Homodimer.

The protein resides in the cytoplasm. The enzyme catalyses pseudouridine(1915) in 23S rRNA + S-adenosyl-L-methionine = N(3)-methylpseudouridine(1915) in 23S rRNA + S-adenosyl-L-homocysteine + H(+). Specifically methylates the pseudouridine at position 1915 (m3Psi1915) in 23S rRNA. The polypeptide is Ribosomal RNA large subunit methyltransferase H (Ureaplasma parvum serovar 3 (strain ATCC 27815 / 27 / NCTC 11736)).